The primary structure comprises 148 residues: Large ribosomal subunit protein bL9 (148 aa).

Belongs to the bacterial ribosomal protein bL9 family.

Binds to the 23S rRNA. The polypeptide is Large ribosomal subunit protein bL9 (Bifidobacterium animalis subsp. lactis (strain AD011)).